The chain runs to 472 residues: Divalent metal cation transporter MntH (472 aa).

11 helical membrane passes run 59 to 79 (LLAF…PGNW), 92 to 112 (MLLS…ALAA), 136 to 156 (LALW…EVIG), 167 to 187 (VPII…LLLM), 196 to 216 (AFVI…IVLA), 233 to 253 (VVAD…TVMP), 288 to 308 (LALM…AAVF), 325 to 345 (LLAP…ALLA), 377 to 397 (VLTR…YGEQ), 402 to 422 (LLLL…IPLL), and 439 to 459 (WLMV…VKLL).

It belongs to the NRAMP family.

It is found in the cell inner membrane. In terms of biological role, h(+)-stimulated, divalent metal cation uptake system. The chain is Divalent metal cation transporter MntH from Xylella fastidiosa (strain 9a5c).